Here is a 345-residue protein sequence, read N- to C-terminus: MRVTDFSFDLPDELIARYPMAQRNASRLLTLDGNTGTLADKQFTDLLGMINPGDLMVFNNTRVIPARLFGQKASGGKLEILVERMLDDKRILAHVRSSKSPKVDSIIHLDGGYEMKMAARYDALFELELLSDLTILEVLEAVGHMPLPPYIDRPDEDADKERYQTVYNQNPGAVAAPTAGLHFDDAMLDALKAKGVNIAFVTLHVGAGTFQPVRVDNVLEHKMHSEWANVPQDVVDLIAQTKAAGKRVVAVGTTSVRSLESAARASEGELKAFSGDTDIFIYPGYQFQIVDAMITNFHLPESTLIMLVSAFAGFDHVMAAYQHAITQKYRFFSYGDAMFVTKKAH.

This sequence belongs to the QueA family. As to quaternary structure, monomer.

The protein localises to the cytoplasm. It carries out the reaction 7-aminomethyl-7-carbaguanosine(34) in tRNA + S-adenosyl-L-methionine = epoxyqueuosine(34) in tRNA + adenine + L-methionine + 2 H(+). It participates in tRNA modification; tRNA-queuosine biosynthesis. Transfers and isomerizes the ribose moiety from AdoMet to the 7-aminomethyl group of 7-deazaguanine (preQ1-tRNA) to give epoxyqueuosine (oQ-tRNA). The chain is S-adenosylmethionine:tRNA ribosyltransferase-isomerase from Shewanella sp. (strain ANA-3).